A 755-amino-acid chain; its full sequence is Exocyst complex component 3 (755 aa).

Lys38 bears the N6-acetyllysine mark.

It belongs to the SEC6 family. In terms of assembly, the exocyst complex is composed of EXOC1, EXOC2, EXOC3, EXOC4, EXOC5, EXOC6, EXOC7 and EXOC8. Interacts with EXOC3L1. Interacts with BIRC6/bruce. Interacts with MYRIP. Interacts with SLC6A9.

It localises to the cytoplasm. It is found in the perinuclear region. Its subcellular location is the cell projection. The protein localises to the growth cone. The protein resides in the midbody. It localises to the golgi apparatus. It is found in the neuron projection. In terms of biological role, component of the exocyst complex involved in the docking of exocytic vesicles with fusion sites on the plasma membrane. The sequence is that of Exocyst complex component 3 (Exoc3) from Mus musculus (Mouse).